The sequence spans 194 residues: Dof zinc finger protein DOF1.7 (194 aa).

The Dof-type zinc finger occupies 33 to 87 (LKCPRCDSPNTKFCYYNNYNLSQPRHFCKNCRRYWTKGGALRNIPVGGGTRKSNK). Zn(2+)-binding residues include C35, C38, C60, and C63. A disordered region spans residues 74 to 125 (RNIPVGGGTRKSNKRSGSSPSSNLKNQTVAEKPDHHGSGSEEKEERVSGQEM). Over residues 88-99 (RSGSSPSSNLKN) the composition is skewed to low complexity. The segment covering 104 to 121 (EKPDHHGSGSEEKEERVS) has biased composition (basic and acidic residues).

Its subcellular location is the nucleus. Functionally, transcription factor that binds specifically to a 5'-AA[AG]G-3' consensus core sequence. The polypeptide is Dof zinc finger protein DOF1.7 (DOF1.7) (Arabidopsis thaliana (Mouse-ear cress)).